We begin with the raw amino-acid sequence, 51 residues long: Cytochrome b559 subunit beta (51 aa).

Residues 26–42 (WLAVHALAVPTVFFIGS) form a helical membrane-spanning segment. His-30 serves as a coordination point for heme.

Belongs to the PsbE/PsbF family. In terms of assembly, heterodimer of an alpha subunit and a beta subunit. PSII is composed of 1 copy each of membrane proteins PsbA, PsbB, PsbC, PsbD, PsbE, PsbF, PsbH, PsbI, PsbJ, PsbK, PsbL, PsbM, PsbT, PsbY, PsbZ, Psb30/Ycf12, at least 3 peripheral proteins of the oxygen-evolving complex and a large number of cofactors. It forms dimeric complexes. It depends on heme b as a cofactor.

It localises to the plastid. Its subcellular location is the chloroplast thylakoid membrane. In terms of biological role, this b-type cytochrome is tightly associated with the reaction center of photosystem II (PSII). PSII is a light-driven water:plastoquinone oxidoreductase that uses light energy to abstract electrons from H(2)O, generating O(2) and a proton gradient subsequently used for ATP formation. It consists of a core antenna complex that captures photons, and an electron transfer chain that converts photonic excitation into a charge separation. This chain is Cytochrome b559 subunit beta, found in Bigelowiella natans (Pedinomonas minutissima).